The primary structure comprises 103 residues: Small ribosomal subunit protein uS10 (103 aa).

The protein belongs to the universal ribosomal protein uS10 family. In terms of assembly, part of the 30S ribosomal subunit.

In terms of biological role, involved in the binding of tRNA to the ribosomes. The polypeptide is Small ribosomal subunit protein uS10 (Aromatoleum aromaticum (strain DSM 19018 / LMG 30748 / EbN1) (Azoarcus sp. (strain EbN1))).